The following is a 1456-amino-acid chain: DNA polymerase gamma, mitochondrial (1456 aa).

The transit peptide at 1–41 directs the protein to the mitochondrion; the sequence is MLTPVRCRTVPNATVATAARVLRRANLFSRYPRQLGHLRWD. Disordered stretches follow at residues 1200-1266 and 1308-1443; these read APEM…SLDD and AVTT…SWKP. Residues 1204-1239 are compositionally biased toward low complexity; that stretch reads AAVPSTSSESKSKASATTSTTTTENATASPSSSSNV. A compositionally biased stretch (pro residues) spans 1315-1325; sequence PEPPTNPPPVA. Composition is skewed to low complexity over residues 1346 to 1371 and 1411 to 1428; these read PKNP…TPKP and TASV…ATAT.

Belongs to the DNA polymerase type-A family. Mg(2+) serves as cofactor.

It is found in the mitochondrion. It catalyses the reaction DNA(n) + a 2'-deoxyribonucleoside 5'-triphosphate = DNA(n+1) + diphosphate. In terms of biological role, involved in the replication of mitochondrial DNA. In Neurospora crassa (strain ATCC 24698 / 74-OR23-1A / CBS 708.71 / DSM 1257 / FGSC 987), this protein is DNA polymerase gamma, mitochondrial (mip-1).